The primary structure comprises 216 residues: uncharacterized protein (216 aa).

Positions 1-17 are cleaved as a signal peptide; the sequence is MLKKIIILFLGMFLLSA. The N-palmitoyl cysteine moiety is linked to residue Cys18. Cys18 is lipidated: S-diacylglycerol cysteine. Residues 133-162 are a coiled coil; sequence SDKEKKIQEELNQIKAMLRETKRDISKYTC.

It localises to the cell membrane. This is an uncharacterized protein from Rickettsia conorii (strain ATCC VR-613 / Malish 7).